The following is a 211-amino-acid chain: WAP four-disulfide core domain protein 1 (211 aa).

The N-terminal stretch at 1 to 23 (MGNCGRKVLRALSFLLLLGSSSA) is a signal peptide. A WAP domain is found at 50 to 99 (RQPHADRCPPPPRTLPPGACQATRCQADSECPRHRRCCYNGCAYACLEAV). Cystine bridges form between cysteine 57–cysteine 87, cysteine 69–cysteine 91, cysteine 74–cysteine 86, and cysteine 80–cysteine 95. Residues 182–198 (VLRQRLHKEYPEGDSKN) show a composition bias toward basic and acidic residues. Positions 182–211 (VLRQRLHKEYPEGDSKNVAEPGKGQQRHFP) are disordered.

The protein resides in the secreted. In terms of biological role, has growth inhibitory activity. The chain is WAP four-disulfide core domain protein 1 (Wfdc1) from Mus musculus (Mouse).